Here is a 283-residue protein sequence, read N- to C-terminus: Thymidylate synthase (283 aa).

R22 is a binding site for dUMP. C160 (nucleophile) is an active-site residue. DUMP contacts are provided by residues 180 to 183 (RSCD), N191, and 221 to 223 (HIY). Residue D183 participates in (6R)-5,10-methylene-5,6,7,8-tetrahydrofolate binding. S282 contacts (6R)-5,10-methylene-5,6,7,8-tetrahydrofolate.

This sequence belongs to the thymidylate synthase family. Bacterial-type ThyA subfamily. Homodimer.

It is found in the cytoplasm. It carries out the reaction dUMP + (6R)-5,10-methylene-5,6,7,8-tetrahydrofolate = 7,8-dihydrofolate + dTMP. Its pathway is pyrimidine metabolism; dTTP biosynthesis. In terms of biological role, catalyzes the reductive methylation of 2'-deoxyuridine-5'-monophosphate (dUMP) to 2'-deoxythymidine-5'-monophosphate (dTMP) while utilizing 5,10-methylenetetrahydrofolate (mTHF) as the methyl donor and reductant in the reaction, yielding dihydrofolate (DHF) as a by-product. This enzymatic reaction provides an intracellular de novo source of dTMP, an essential precursor for DNA biosynthesis. In Haemophilus influenzae (strain ATCC 51907 / DSM 11121 / KW20 / Rd), this protein is Thymidylate synthase.